The primary structure comprises 342 residues: Immune-associated nucleotide-binding protein 9 (342 aa).

In terms of domain architecture, AIG1-type G spans 22-229; the sequence is NPKRTLVLVG…YSDELFHELQ (208 aa). The segment at 31–38 is G1; it reads GRTGNGKS. Residues 31–39 and S52 contribute to the GTP site; that span reads GRTGNGKSA. The G2 stretch occupies residues 58 to 62; sequence GVTST. Residues 80–83 form a G3 region; that stretch reads DTPG. Residues 149-152 are G4; it reads TGGD. The segment at 188 to 190 is G5; it reads NNK. Position 189 (N189) interacts with GTP. Residues 276–342 are a coiled coil; sequence ETKLRDTAKR…QKKLGKCINL (67 aa).

This sequence belongs to the TRAFAC class TrmE-Era-EngA-EngB-Septin-like GTPase superfamily. AIG1/Toc34/Toc159-like paraseptin GTPase family. IAN subfamily. Mainly expressed in leaves.

The chain is Immune-associated nucleotide-binding protein 9 from Arabidopsis thaliana (Mouse-ear cress).